Consider the following 176-residue polypeptide: ATP-dependent protease subunit HslV (176 aa).

The active site involves Thr-2. The Na(+) site is built by Gly-157, Cys-160, and Thr-163.

Belongs to the peptidase T1B family. HslV subfamily. In terms of assembly, a double ring-shaped homohexamer of HslV is capped on each side by a ring-shaped HslU homohexamer. The assembly of the HslU/HslV complex is dependent on binding of ATP.

The protein localises to the cytoplasm. The catalysed reaction is ATP-dependent cleavage of peptide bonds with broad specificity.. Its activity is regulated as follows. Allosterically activated by HslU binding. Its function is as follows. Protease subunit of a proteasome-like degradation complex believed to be a general protein degrading machinery. In Pseudomonas fluorescens (strain ATCC BAA-477 / NRRL B-23932 / Pf-5), this protein is ATP-dependent protease subunit HslV.